Reading from the N-terminus, the 79-residue chain is Small ribosomal subunit protein bS18 (79 aa).

Belongs to the bacterial ribosomal protein bS18 family. Part of the 30S ribosomal subunit. Forms a tight heterodimer with protein bS6.

In terms of biological role, binds as a heterodimer with protein bS6 to the central domain of the 16S rRNA, where it helps stabilize the platform of the 30S subunit. This chain is Small ribosomal subunit protein bS18, found in Aster yellows witches'-broom phytoplasma (strain AYWB).